The following is a 644-amino-acid chain: MSSSRKQARLDAKTNIESLSVQPYPNSNKVYIEGSRPDIRVPMREISLADSLVGGTKESPIFEPNEPIQVYDTSGVYTDPSYDIDVYKGLPKLRQEWIEERNDTELLDGVSSVYSQERLADETLDELRYGNLPTIRRAKQGQCVTQLHYARQGIITPEMEYIAIRENMGRQKFADEQLNHQHPGHSFGANLPKEITPEFVRREVAEGRAIIPSNINHPEAEPMIIGRNFLIKVNANIGNSSVSSSIEEEVEKLVWSTRWGGDTVMDLSTGRNIHETREWILRNSPVPIGTVPMYQALEKVNGVAENLNWEVMRDTLIEQAEQGVDYFTIHAGLLLRYVPMTAKRVTGIVSRGGSIIAKWCLAHHQESFLYTHFREICEICAKYDVALSLGDGLRPGSVADANDEAQFAELRTLGELTKVAWEYDVQVIIEGPGHVPMHMIKENMDEQLKHCHEAPFYTLGPLTTDIAPGYDHITSGIGAAMIGWYGCAMLCYVTPKEHLGLPNKDDVKTGLITYKLAAHAGDLAKGHPGAQIRDNALSKARFEFRWEDQFNLSLDPITAREYHDETLPQESGKVAHFCSMCGPKFCSMKISQEVREYAKDSEQVALDQAIEIKMIDDPLEGMRQKSEEFKASGSELYHPVVEAE.

Substrate-binding positions include Asn236, Met265, Tyr294, His330, 350–352 (SRG), 391–394 (DGLR), and Glu430. His434 is a Zn(2+) binding site. Tyr457 provides a ligand contact to substrate. His498 is a binding site for Zn(2+). Residues Cys578, Cys581, and Cys586 each contribute to the [4Fe-4S] cluster site.

The protein belongs to the ThiC family. As to quaternary structure, homodimer. It depends on [4Fe-4S] cluster as a cofactor.

The enzyme catalyses 5-amino-1-(5-phospho-beta-D-ribosyl)imidazole + S-adenosyl-L-methionine = 4-amino-2-methyl-5-(phosphooxymethyl)pyrimidine + CO + 5'-deoxyadenosine + formate + L-methionine + 3 H(+). The protein operates within cofactor biosynthesis; thiamine diphosphate biosynthesis. Catalyzes the synthesis of the hydroxymethylpyrimidine phosphate (HMP-P) moiety of thiamine from aminoimidazole ribotide (AIR) in a radical S-adenosyl-L-methionine (SAM)-dependent reaction. The polypeptide is Phosphomethylpyrimidine synthase (Aliivibrio fischeri (strain ATCC 700601 / ES114) (Vibrio fischeri)).